The primary structure comprises 329 residues: Tyrosine recombinase XerC 1 (329 aa).

One can recognise a Core-binding (CB) domain in the interval 14-101 (APPHPQIGAY…AWRGWYQWLA (88 aa)). Residues 123–320 (RLPKALSVEQ…DFQHLAKIYD (198 aa)) form the Tyr recombinase domain. Active-site residues include arginine 163, lysine 198, histidine 272, arginine 275, and histidine 298. Tyrosine 307 serves as the catalytic O-(3'-phospho-DNA)-tyrosine intermediate.

It belongs to the 'phage' integrase family. XerC subfamily. In terms of assembly, forms a cyclic heterotetrameric complex composed of two molecules of XerC and two molecules of XerD.

It is found in the cytoplasm. Functionally, site-specific tyrosine recombinase, which acts by catalyzing the cutting and rejoining of the recombining DNA molecules. The XerC-XerD complex is essential to convert dimers of the bacterial chromosome into monomers to permit their segregation at cell division. It also contributes to the segregational stability of plasmids. This chain is Tyrosine recombinase XerC 1 (xerC1), found in Ralstonia nicotianae (strain ATCC BAA-1114 / GMI1000) (Ralstonia solanacearum).